A 2116-amino-acid chain; its full sequence is Unconventional myosin-VIIb (2116 aa).

The Myosin motor domain occupies 65-760 (QGVDDMIRLG…QDTLLEVQRS (696 aa)). 158–165 (GESGAGKT) serves as a coordination point for ATP. An actin-binding region spans residues 637–659 (LDQLMKILTNCQPYFIRCIKPNE). 6 consecutive IQ domains span residues 745-765 (IFLR…VLDR), 763-792 (LDRA…AAVT), 786-815 (QRRA…GFER), 814-834 (ERLQ…AMRQ), 832-861 (MRQR…AVVV), and 855-884 (KRRA…NAPL). Phosphoserine is present on Ser-904. The segment at 916-1542 (EKVFGFLPAM…KKQGLLASEN (627 aa)) is mediates interaction with ANKS4B. One can recognise a MyTH4 1 domain in the interval 989-1192 (HIRRPLRYPL…PTWLELQAVK (204 aa)). The 310-residue stretch at 1197–1506 (IPIQVILATG…EGLKERSIFA (310 aa)) folds into the FERM 1 domain. Ser-1371 is subject to Phosphoserine. The SH3 domain maps to 1501 to 1567 (ERSIFAMALQ…PMACLYTIPT (67 aa)). The segment at 1501–2116 (ERSIFAMALQ…GSKAPALAST (616 aa)) is mediates interaction with CDHR2, CDHR5 and USH1C. MyTH4 domains lie at 1644–1793 (YSCE…EAAE) and 1790–1896 (EAAE…KLWL). Ser-1645 carries the post-translational modification Phosphoserine. Positions 1799–2102 (ICHKIYFPND…SYVQQLLSAM (304 aa)) constitute an FERM 2 domain.

This sequence belongs to the TRAFAC class myosin-kinesin ATPase superfamily. Myosin family. As to quaternary structure, part of the IMAC/intermicrovillar adhesion complex/intermicrovillar tip-link complex composed of ANKS4B, MYO7B, USH1C, CDHR2 and CDHR5. Interacts with CDHR2. Interacts with CDHR5. Interacts with USH1C. Interacts with ANKS4B; requires initial interaction with USH1C. Interacts with CALML4; the interaction mediates the association of CALML4 with the IMAC/intermicrovillar adhesion complex.

It localises to the cytoplasm. Its subcellular location is the cytoskeleton. The protein localises to the cell projection. It is found in the microvillus. In terms of biological role, myosins are actin-based motor molecules with ATPase activity. Their highly divergent tails are presumed to bind to membranous compartments, which would be moved relative to actin filaments. As part of the intermicrovillar adhesion complex/IMAC plays a role in epithelial brush border differentiation, controlling microvilli organization and length. May link the complex to the actin core bundle of microvilli. This Homo sapiens (Human) protein is Unconventional myosin-VIIb.